The following is a 409-amino-acid chain: Elongation factor Tu (409 aa).

One can recognise a tr-type G domain in the interval 10 to 214 (KPHVNIGTIG…EVDAYIPTPE (205 aa)). Residues 19–26 (GHVDHGKT) are G1. Residue 19–26 (GHVDHGKT) participates in GTP binding. Position 26 (Thr26) interacts with Mg(2+). Residues 60-64 (GITIN) form a G2 region. The tract at residues 81–84 (DCPG) is G3. GTP-binding positions include 81–85 (DCPGH) and 136–139 (NKQD). A G4 region spans residues 136-139 (NKQD). The interval 174–176 (SAL) is G5.

This sequence belongs to the TRAFAC class translation factor GTPase superfamily. Classic translation factor GTPase family. EF-Tu/EF-1A subfamily. As to quaternary structure, monomer.

Its subcellular location is the cytoplasm. The catalysed reaction is GTP + H2O = GDP + phosphate + H(+). In terms of biological role, GTP hydrolase that promotes the GTP-dependent binding of aminoacyl-tRNA to the A-site of ribosomes during protein biosynthesis. This Acaryochloris marina (strain MBIC 11017) protein is Elongation factor Tu.